A 348-amino-acid polypeptide reads, in one-letter code: Dihydroorotase (348 aa).

Zn(2+) contacts are provided by His17 and His19. Residues 19-21 (HLR) and Asn45 contribute to the substrate site. The Zn(2+) site is built by Lys103, His140, and His178. Residue Lys103 is modified to N6-carboxylysine. His140 is a substrate binding site. Leu223 provides a ligand contact to substrate. Asp251 serves as a coordination point for Zn(2+). Asp251 is an active-site residue. Substrate is bound by residues His255 and Ala267.

Belongs to the metallo-dependent hydrolases superfamily. DHOase family. Class II DHOase subfamily. In terms of assembly, homodimer. Zn(2+) serves as cofactor.

The enzyme catalyses (S)-dihydroorotate + H2O = N-carbamoyl-L-aspartate + H(+). The protein operates within pyrimidine metabolism; UMP biosynthesis via de novo pathway; (S)-dihydroorotate from bicarbonate: step 3/3. Its function is as follows. Catalyzes the reversible cyclization of carbamoyl aspartate to dihydroorotate. The chain is Dihydroorotase from Enterobacter sp. (strain 638).